The following is a 450-amino-acid chain: Solute carrier family 52, riboflavin transporter, member 2 (450 aa).

Helical transmembrane passes span 14–34, 47–67, 86–106, 112–132, and 147–167; these read LLVALFGMGSWAAVNGIWVEL, LPSYLSVLVALGNLGLLLVTL, GLGIVGTGLLASLWNHVAPVA, VAFLTLAFVLALACCASNVTF, and FFLGQGLSALLPCVLALGQGV. N178 carries an N-linked (GlcNAc...) asparagine glycan. Residues 201–221 form a helical membrane-spanning segment; sequence FFWVLTALLGTSAAAFQGLLL. Residues 227-236 show a composition bias toward low complexity; sequence TSEPTTGTGL. Residues 227–264 form a disordered region; the sequence is TSEPTTGTGLRVETPGTEEEEEEEEASPLQEPPGQVAG. Positions 242–252 are enriched in acidic residues; it reads GTEEEEEEEEA. The next 5 membrane-spanning stretches (helical) occupy residues 282-302, 317-337, 344-364, 369-389, and 409-429; these read ACLLGLLAITNALTNGVLPAV, LAVVLGSCANPLACFLAMAVL, LCGLSLLGMLLGSYLMTLAAL, PLVGTSAGVVLVVLSWVLCAG, and ALLAAGVAIQVGSLLGAVAMF.

Belongs to the riboflavin transporter family.

The protein localises to the cell membrane. The enzyme catalyses riboflavin(in) = riboflavin(out). Riboflavin transport is Na(+)-independent but moderately pH-sensitive. Activity is strongly inhibited by riboflavin analogs, such as lumiflavin. Weakly inhibited by flavin adenine dinucleotide (FAD) and flavin mononucleotide (FMN). Functionally, plasma membrane transporter mediating the uptake by cells of the water soluble vitamin B2/riboflavin that plays a key role in biochemical oxidation-reduction reactions of the carbohydrate, lipid, and amino acid metabolism. May also act as a receptor for 4-hydroxybutyrate. This chain is Solute carrier family 52, riboflavin transporter, member 2 (Slc52a2), found in Mus musculus (Mouse).